We begin with the raw amino-acid sequence, 208 residues long: Small ribosomal subunit protein uS3 (208 aa).

The region spanning 16–85 (IDEYFKKELS…KPQIDVKPVE (70 aa)) is the KH type-2 domain.

This sequence belongs to the universal ribosomal protein uS3 family. In terms of assembly, part of the 30S ribosomal subunit.

Binds the lower part of the 30S subunit head. The protein is Small ribosomal subunit protein uS3 of Methanocaldococcus jannaschii (strain ATCC 43067 / DSM 2661 / JAL-1 / JCM 10045 / NBRC 100440) (Methanococcus jannaschii).